Consider the following 691-residue polypeptide: Two-component response regulator ORR21 (691 aa).

The Response regulatory domain maps to 17 to 132; the sequence is KVLVVDDDPT…ELKNIWQHVI (116 aa). At aspartate 68 the chain carries 4-aspartylphosphate. The span at 139 to 155 shows a compositional bias: basic and acidic residues; sequence NKEHEHSGSLDDTDRTR. The disordered stretch occupies residues 139–204; the sequence is NKEHEHSGSL…DPSSTSKKPR (66 aa). The segment at residues 199–258 is a DNA-binding region (myb-like GARP); that stretch reads TSKKPRVVWSVELHQQFVNAVNHLGIDKAVPKKILELMNVPGLTRENVASHLQKFRLYLK.

Belongs to the ARR family. Type-B subfamily. Two-component system major event consists of a His-to-Asp phosphorelay between a sensor histidine kinase (HK) and a response regulator (RR). In plants, the His-to-Asp phosphorelay involves an additional intermediate named Histidine-containing phosphotransfer protein (HPt). This multistep phosphorelay consists of a His-Asp-His-Asp sequential transfer of a phosphate group between first a His and an Asp of the HK protein, followed by the transfer to a conserved His of the HPt protein and finally the transfer to an Asp in the receiver domain of the RR protein.

It localises to the nucleus. In terms of biological role, transcriptional activator that binds specific DNA sequence. Functions as a response regulator involved in His-to-Asp phosphorelay signal transduction system. Phosphorylation of the Asp residue in the receiver domain activates the ability of the protein to promote the transcription of target genes. May directly activate some type-A response regulators in response to cytokinins. The polypeptide is Two-component response regulator ORR21 (Oryza sativa subsp. japonica (Rice)).